A 138-amino-acid polypeptide reads, in one-letter code: Acidic phospholipase A2 homolog sistruxin A (138 aa).

A signal peptide spans Met-1–Tyr-37. 7 cysteine pairs are disulfide-bonded: Cys-42–Cys-131, Cys-44–Cys-60, Cys-59–Cys-111, Cys-65–Cys-138, Cys-66–Cys-104, Cys-73–Cys-97, and Cys-91–Cys-102. Positions Asp-78–Arg-83 are excised as a propeptide. Pyrrolidone carboxylic acid is present on Gln-84. The propeptide occupies Tyr-119–Trp-124.

Belongs to the phospholipase A2 family. Group II subfamily. D49 sub-subfamily. As to quaternary structure, heterodimer of an acidic subunit and a basic chain. The acidic subunit is non-toxic, without enzymatic activity and comprises 3 peptides that are cross-linked by 7 disulfide bridges. The basic subunit is toxic, has phospholipase A2 activity and is composed of a single chain. As to expression, expressed by the venom gland.

It is found in the secreted. Its function is as follows. Snake venom phospholipase A2 (PLA2) that inhibits neuromuscular transmission by blocking acetylcholine release from the nerve termini. The protein is Acidic phospholipase A2 homolog sistruxin A of Sistrurus tergeminus (Western massasauga).